Reading from the N-terminus, the 732-residue chain is Engulfment and cell motility protein 2 (732 aa).

Y48 bears the Phosphotyrosine mark. One can recognise an ELMO domain in the interval 323-497 (AQRDIIFELR…VVREQITRAL (175 aa)). S515 carries the post-translational modification Phosphoserine. The region spanning 565–686 (SSFRKIGNRR…LLGKDMSSEL (122 aa)) is the PH domain. Positions 712-719 (PEAPPPVP) match the SH3-binding motif. Y729 bears the Phosphotyrosine mark.

As to quaternary structure, interacts directly with the SH3-domain of DOCK1 via its SH3-binding site. Probably forms a heterotrimeric complex with DOCK1 and RAC1. Interacts with ARHGEF16, DOCK4 and EPHA2; mediates activation of RAC1 by EPHA2. Interacts with ADGRB3. Interacts with AUTS2; the interaction is direct.

Its subcellular location is the cytoplasm. It is found in the cytosol. It localises to the membrane. Its function is as follows. Involved in cytoskeletal rearrangements required for phagocytosis of apoptotic cells and cell motility. Acts in association with DOCK1 and CRK. Was initially proposed to be required in complex with DOCK1 to activate Rac Rho small GTPases. May enhance the guanine nucleotide exchange factor (GEF) activity of DOCK1. This chain is Engulfment and cell motility protein 2 (Elmo2), found in Mus musculus (Mouse).